Reading from the N-terminus, the 290-residue chain is Acetyl-coenzyme A carboxylase carboxyl transferase subunit beta (290 aa).

One can recognise a CoA carboxyltransferase N-terminal domain in the interval 28–290 (LMNKCSKCGT…TVREGLSHGG (263 aa)). Residues C32, C35, C51, and C54 each contribute to the Zn(2+) site. A C4-type zinc finger spans residues 32 to 54 (CSKCGTIQYSKELDKNLKVCSSC).

It belongs to the AccD/PCCB family. Acetyl-CoA carboxylase is a heterohexamer composed of biotin carboxyl carrier protein (AccB), biotin carboxylase (AccC) and two subunits each of ACCase subunit alpha (AccA) and ACCase subunit beta (AccD). The cofactor is Zn(2+).

It is found in the cytoplasm. The catalysed reaction is N(6)-carboxybiotinyl-L-lysyl-[protein] + acetyl-CoA = N(6)-biotinyl-L-lysyl-[protein] + malonyl-CoA. It participates in lipid metabolism; malonyl-CoA biosynthesis; malonyl-CoA from acetyl-CoA: step 1/1. Its function is as follows. Component of the acetyl coenzyme A carboxylase (ACC) complex. Biotin carboxylase (BC) catalyzes the carboxylation of biotin on its carrier protein (BCCP) and then the CO(2) group is transferred by the transcarboxylase to acetyl-CoA to form malonyl-CoA. The sequence is that of Acetyl-coenzyme A carboxylase carboxyl transferase subunit beta from Paenibacillus sp. (strain JDR-2).